Consider the following 359-residue polypeptide: Peptide methionine sulfoxide reductase MsrA/MsrB (359 aa).

Positions R36–K189 are peptide methionine sulfoxide reductase A. C44 is an active-site residue. One can recognise a MsrB domain in the interval D206–L329. Catalysis depends on C318, which acts as the Nucleophile.

This sequence in the N-terminal section; belongs to the MsrA Met sulfoxide reductase family. The protein in the C-terminal section; belongs to the MsrB Met sulfoxide reductase family.

The catalysed reaction is L-methionyl-[protein] + [thioredoxin]-disulfide + H2O = L-methionyl-(S)-S-oxide-[protein] + [thioredoxin]-dithiol. It carries out the reaction [thioredoxin]-disulfide + L-methionine + H2O = L-methionine (S)-S-oxide + [thioredoxin]-dithiol. The enzyme catalyses L-methionyl-[protein] + [thioredoxin]-disulfide + H2O = L-methionyl-(R)-S-oxide-[protein] + [thioredoxin]-dithiol. Functionally, has an important function as a repair enzyme for proteins that have been inactivated by oxidation. Catalyzes the reversible oxidation-reduction of methionine sulfoxide in proteins to methionine. The chain is Peptide methionine sulfoxide reductase MsrA/MsrB (msrAB) from Helicobacter pylori (strain ATCC 700392 / 26695) (Campylobacter pylori).